Reading from the N-terminus, the 994-residue chain is Cation-chloride cotransporter 2 (994 aa).

The segment at 1 to 28 (MERGGFGGAGRHDEEAPAMRPAPQQRYR) is disordered. Residues 1-139 (MERGGFGGAG…GHPKETETKL (139 aa)) are Cytoplasmic-facing. Residues 140 to 160 (DTMMGVFVPCLQNILGIIYYI) traverse the membrane as a helical segment. At 161–174 (RFTWIVGMGGVWQS) the chain is on the extracellular side. A helical transmembrane segment spans residues 175–195 (LVLVAFCGSCTFLTTISLSAI). Residues 196-221 (ATNGAMKGGGPYYLIGRALGPEVGVS) lie on the Cytoplasmic side of the membrane. Residues 222 to 242 (IGLCFFLGNAVAGAMYVLGAV) traverse the membrane as a helical segment. The Extracellular segment spans residues 243–287 (ETFLDAVPSAEFFQESVTVVTNTFVNGTAAGNATTISTPNLHDLQ). N-linked (GlcNAc...) asparagine glycans are attached at residues N268 and N274. A helical transmembrane segment spans residues 288 to 308 (VYGIIVTILLCFIVFGGVKII). At 309-311 (NKV) the chain is on the cytoplasmic side. Residues 312 to 332 (APAFLIPVLFSILCIYIGVFI) traverse the membrane as a helical segment. Residues 333 to 372 (APRPNASKWITGLSITTLKDNWSSDYQRTNNAGVPDPNGS) are Extracellular-facing. N337, N353, and N370 each carry an N-linked (GlcNAc...) asparagine glycan. The chain crosses the membrane as a helical span at residues 373–393 (IYWDFNALLGLYFPAVTGIMA). Over 394–412 (GSNRSASLKDTQRSIPIGT) the chain is Cytoplasmic. A helical membrane pass occupies residues 413–433 (LHATISTTMMYLLSVFLFGAL). Residues 434–448 (STREGLLTDRLLCAA) are Extracellular-facing. A helical membrane pass occupies residues 449 to 469 (VAWPSPAVVYAGIILSTLGAA). Topologically, residues 470–505 (LQSLTGAPRLLAAIANDDILPVLNYFKAYEGSEPHV) are cytoplasmic. A helical transmembrane segment spans residues 506–526 (ATLFTSFICISCVIIGNLDVI). Residues 527-529 (TPT) are Extracellular-facing. The helical transmembrane segment at 530–552 (ITMFFLLCYAGVNLSCFLLDLLD) threads the bilayer. The Cytoplasmic portion of the chain corresponds to 553–558 (APSWRP). A helical membrane pass occupies residues 559-579 (RWKLHHWSLSLIGALLCIVIM). Residues 580 to 585 (FMISWT) lie on the Extracellular side of the membrane. The helical transmembrane segment at 586–606 (FTVVSLALASLIYYYVSLKGK) threads the bilayer. Topologically, residues 607–994 (AGDWGDGFKS…YRRDVVTLFT (388 aa)) are cytoplasmic.

The protein belongs to the SLC12A transporter family.

It localises to the membrane. Probable cation/chloride cotransporter. The protein is Cation-chloride cotransporter 2 (CCC2) of Oryza sativa subsp. japonica (Rice).